A 275-amino-acid polypeptide reads, in one-letter code: 4-diphosphocytidyl-2-C-methyl-D-erythritol kinase (275 aa).

K14 is a catalytic residue. ATP is bound at residue 98–108 (PMGAGLGGGSS). D140 is a catalytic residue.

The protein belongs to the GHMP kinase family. IspE subfamily.

It carries out the reaction 4-CDP-2-C-methyl-D-erythritol + ATP = 4-CDP-2-C-methyl-D-erythritol 2-phosphate + ADP + H(+). It functions in the pathway isoprenoid biosynthesis; isopentenyl diphosphate biosynthesis via DXP pathway; isopentenyl diphosphate from 1-deoxy-D-xylulose 5-phosphate: step 3/6. In terms of biological role, catalyzes the phosphorylation of the position 2 hydroxy group of 4-diphosphocytidyl-2C-methyl-D-erythritol. The sequence is that of 4-diphosphocytidyl-2-C-methyl-D-erythritol kinase from Francisella tularensis subsp. novicida (strain U112).